We begin with the raw amino-acid sequence, 444 residues long: C4-dicarboxylate transport protein (444 aa).

A run of 9 helical transmembrane segments spans residues 21–41 (HLYV…HFYP), 57–77 (LVKM…IAGM), 92–112 (IYFL…ANVV), 161–181 (GDIL…ALVG), 201–221 (LVSI…AFTI), 234–254 (LLIG…LGAV), 320–340 (IYMT…LSLS), 345–365 (LLLV…AGFI), and 368–388 (AATL…ILGI).

This sequence belongs to the dicarboxylate/amino acid:cation symporter (DAACS) (TC 2.A.23) family.

It is found in the cell inner membrane. In terms of biological role, responsible for the transport of dicarboxylates such as succinate, fumarate, and malate from the periplasm across the membrane. The protein is C4-dicarboxylate transport protein of Brucella anthropi (strain ATCC 49188 / DSM 6882 / CCUG 24695 / JCM 21032 / LMG 3331 / NBRC 15819 / NCTC 12168 / Alc 37) (Ochrobactrum anthropi).